Consider the following 806-residue polypeptide: Acetyl-CoA decarbonylase/synthase complex subunit alpha 1 (806 aa).

[4Fe-4S] cluster-binding residues include Cys73, Cys76, Cys77, Cys79, Cys84, and Cys94. His117 contributes to the CO binding site. His250, Cys278, and Cys323 together coordinate [Ni-4Fe-4S] cluster. 2 4Fe-4S ferredoxin-type domains span residues 407 to 436 and 445 to 475; these read DEQMKEWVDKCADCGSCYLVCPEELEIPEA and YSYLVDLHDQCIGCRRCEQVCKKEIPILSVI. [4Fe-4S] cluster contacts are provided by Cys417, Cys420, Cys423, Cys427, Cys455, Cys458, Cys461, and Cys465. [Ni-4Fe-4S] cluster-binding residues include Cys523, Cys552, and Cys587.

The protein belongs to the Ni-containing carbon monoxide dehydrogenase family. As to quaternary structure, heterotetramer of two alpha and two epsilon subunits. The ACDS complex is made up of alpha, epsilon, beta, gamma and delta subunits with a probable stoichiometry of (alpha(2)epsilon(2))(4)-beta(8)-(gamma(1)delta(1))(8). Requires [4Fe-4S] cluster as cofactor. The cofactor is [Ni-4Fe-4S] cluster.

It carries out the reaction CO + 2 oxidized [2Fe-2S]-[ferredoxin] + H2O = 2 reduced [2Fe-2S]-[ferredoxin] + CO2 + 2 H(+). Its pathway is one-carbon metabolism; methanogenesis from acetate. Its function is as follows. Part of the ACDS complex that catalyzes the reversible cleavage of acetyl-CoA, allowing growth on acetate as sole source of carbon and energy. The alpha-epsilon subcomponent functions as a carbon monoxide dehydrogenase. The sequence is that of Acetyl-CoA decarbonylase/synthase complex subunit alpha 1 from Methanosarcina thermophila.